The sequence spans 389 residues: Oxytocin receptor (389 aa).

The segment at 1-27 (MEGELAANWSTEAVNSSAAPPGAEGNC) is disordered. Residues 1–38 (MEGELAANWSTEAVNSSAAPPGAEGNCTAGPPRRNEAL) lie on the Extracellular side of the membrane. 3 N-linked (GlcNAc...) asparagine glycosylation sites follow: Asn-8, Asn-15, and Asn-26. A compositionally biased stretch (polar residues) spans 8–18 (NWSTEAVNSSA). The chain crosses the membrane as a helical span at residues 39-63 (ARVEVAVLCLILFLALSGNACVLLA). Residues 64 to 74 (LRTTRHKHSRL) are Cytoplasmic-facing. A helical membrane pass occupies residues 75–97 (FFFMKHLSIADLVVAVFQVLPQL). Residues 98-113 (LWDITFRFYGPDLLCR) are Extracellular-facing. Residues Cys-112 and Cys-187 are joined by a disulfide bond. A helical membrane pass occupies residues 114–135 (LVKYLQVVGMFASTYLLLLMSL). Topologically, residues 136–154 (DRCLAICQPLRSLRRRTDR) are cytoplasmic. The helical transmembrane segment at 155–175 (LAVLATWLGCLVASAPQVHIF) threads the bilayer. Residues 176–202 (SLREVADGVFDCWAVFIQPWGPKAYIT) lie on the Extracellular side of the membrane. The chain crosses the membrane as a helical span at residues 203–225 (WITLAVYIVPVIVLAACYGLISF). Over 226-275 (KIWQNLRLKTAAAAAAEAPEGAAAGDGGRMALARVSSVKLISKAKIRTVK) the chain is Cytoplasmic. The helical transmembrane segment at 276–294 (MTFIIVLAFIVCWTPFFFV) threads the bilayer. Residues 295–309 (QMWSVWDANAPKEAS) are Extracellular-facing. Residues 310 to 332 (AFIIVMLLASLNSCCNPWIYMLF) traverse the membrane as a helical segment. Over 333–389 (TGHLFHELVQRFLCCSASYLKGNRLGETSTSKKSNSSSFVLSHRSSSQRSCSQPSTA) the chain is Cytoplasmic. The interval 358-389 (GETSTSKKSNSSSFVLSHRSSSQRSCSQPSTA) is disordered. Residues 360–389 (TSTSKKSNSSSFVLSHRSSSQRSCSQPSTA) show a composition bias toward low complexity. Ser-366 and Ser-368 each carry phosphoserine.

It belongs to the G-protein coupled receptor 1 family. Vasopressin/oxytocin receptor subfamily.

It is found in the cell membrane. Functionally, receptor for oxytocin. The activity of this receptor is mediated by G proteins which activate a phosphatidylinositol-calcium second messenger system. The chain is Oxytocin receptor (OXTR) from Macaca mulatta (Rhesus macaque).